A 76-amino-acid chain; its full sequence is DNA-directed RNA polymerase subunit epsilon (76 aa).

It belongs to the RNA polymerase subunit epsilon family. In terms of assembly, RNAP is composed of a core of 2 alpha, a beta and a beta' subunit. The core is associated with a delta subunit, and at least one of epsilon or omega. When a sigma factor is associated with the core the holoenzyme is formed, which can initiate transcription.

The catalysed reaction is RNA(n) + a ribonucleoside 5'-triphosphate = RNA(n+1) + diphosphate. Functionally, a non-essential component of RNA polymerase (RNAP). This chain is DNA-directed RNA polymerase subunit epsilon, found in Streptococcus sanguinis (strain SK36).